The sequence spans 345 residues: NADH-ubiquinone oxidoreductase chain 2 (345 aa).

10 consecutive transmembrane segments (helical) span residues 1-21, 25-45, 59-79, 96-116, 123-143, 148-168, 191-211, 240-260, 274-294, and 324-344; these read MNPIINLILLSSMIAGTILTM, HWVSAWLGLELNTLAIIPIIS, YFLIQAASSALFLLSGITNAY, IMLSVALATKLGLAPIHFWLP, PMITALIITTWQKIAPMALLI, LIPPTITLIMGLLSTIIGGLG, ITITTITPSLALFNLTLYILL, TASLFLLSLLSLGGLPPLSGF, HLTPLALLMAITALLSLMFYL, and SLLSSLILLSLFLLPITPLMI.

Belongs to the complex I subunit 2 family.

It localises to the mitochondrion inner membrane. It carries out the reaction a ubiquinone + NADH + 5 H(+)(in) = a ubiquinol + NAD(+) + 4 H(+)(out). Core subunit of the mitochondrial membrane respiratory chain NADH dehydrogenase (Complex I) that is believed to belong to the minimal assembly required for catalysis. Complex I functions in the transfer of electrons from NADH to the respiratory chain. The immediate electron acceptor for the enzyme is believed to be ubiquinone. The polypeptide is NADH-ubiquinone oxidoreductase chain 2 (MT-ND2) (Varanus timorensis (Timor monitor)).